A 317-amino-acid polypeptide reads, in one-letter code: Ribosomal RNA large subunit methyltransferase F (317 aa).

This sequence belongs to the methyltransferase superfamily. METTL16/RlmF family.

It localises to the cytoplasm. It catalyses the reaction adenosine(1618) in 23S rRNA + S-adenosyl-L-methionine = N(6)-methyladenosine(1618) in 23S rRNA + S-adenosyl-L-homocysteine + H(+). In terms of biological role, specifically methylates the adenine in position 1618 of 23S rRNA. This Pseudomonas putida (strain ATCC 47054 / DSM 6125 / CFBP 8728 / NCIMB 11950 / KT2440) protein is Ribosomal RNA large subunit methyltransferase F.